The chain runs to 303 residues: GTPase Era (303 aa).

Residues 8 to 176 (YCGFIAIVGR…ASIVRKHMPE (169 aa)) enclose the Era-type G domain. A G1 region spans residues 16–23 (GRPNVGKS). 16–23 (GRPNVGKS) lines the GTP pocket. Residues 42–46 (QTTRH) are G2. Positions 63-66 (DTPG) are G3. Residues 63–67 (DTPGL) and 125–128 (NKVD) each bind GTP. Positions 125–128 (NKVD) are G4. Residues 155–157 (ISA) are G5. In terms of domain architecture, KH type-2 spans 207-284 (LGEELPYSVT…HLELWVKVKS (78 aa)).

The protein belongs to the TRAFAC class TrmE-Era-EngA-EngB-Septin-like GTPase superfamily. Era GTPase family. Monomer.

Its subcellular location is the cytoplasm. The protein resides in the cell inner membrane. Functionally, an essential GTPase that binds both GDP and GTP, with rapid nucleotide exchange. Plays a role in 16S rRNA processing and 30S ribosomal subunit biogenesis and possibly also in cell cycle regulation and energy metabolism. This is GTPase Era from Yersinia enterocolitica serotype O:8 / biotype 1B (strain NCTC 13174 / 8081).